The following is a 146-amino-acid chain: Heat-stable 19 kDa antigen (146 aa).

An N-terminal signal peptide occupies residues 1-20 (MKFSLLSAIAAAVFVPFTSA).

This sequence belongs to the cerato-platanin family. Glycosylated.

The protein localises to the secreted. The chain is Heat-stable 19 kDa antigen (CSA) from Coccidioides immitis (strain RS) (Valley fever fungus).